The primary structure comprises 211 residues: Ribosomal RNA large subunit methyltransferase E (211 aa).

Positions 60, 62, 80, 96, and 121 each coordinate S-adenosyl-L-methionine. Lysine 161 serves as the catalytic Proton acceptor.

This sequence belongs to the class I-like SAM-binding methyltransferase superfamily. RNA methyltransferase RlmE family.

Its subcellular location is the cytoplasm. The enzyme catalyses uridine(2552) in 23S rRNA + S-adenosyl-L-methionine = 2'-O-methyluridine(2552) in 23S rRNA + S-adenosyl-L-homocysteine + H(+). Its function is as follows. Specifically methylates the uridine in position 2552 of 23S rRNA at the 2'-O position of the ribose in the fully assembled 50S ribosomal subunit. The polypeptide is Ribosomal RNA large subunit methyltransferase E (Cellvibrio japonicus (strain Ueda107) (Pseudomonas fluorescens subsp. cellulosa)).